The sequence spans 399 residues: S-adenosylmethionine synthase (399 aa).

ATP is bound at residue 135 to 140 (GEGSTD).

It belongs to the AdoMet synthase 2 family. Mg(2+) is required as a cofactor.

It carries out the reaction L-methionine + ATP + H2O = S-adenosyl-L-methionine + phosphate + diphosphate. The protein operates within amino-acid biosynthesis; S-adenosyl-L-methionine biosynthesis; S-adenosyl-L-methionine from L-methionine: step 1/1. Its function is as follows. Catalyzes the formation of S-adenosylmethionine from methionine and ATP. This chain is S-adenosylmethionine synthase (mat), found in Archaeoglobus fulgidus (strain ATCC 49558 / DSM 4304 / JCM 9628 / NBRC 100126 / VC-16).